We begin with the raw amino-acid sequence, 547 residues long: Chaperonin GroEL (547 aa).

ATP-binding positions include 30 to 33 (TLGP), lysine 51, 87 to 91 (DGTTT), glycine 415, 479 to 481 (DAA), and aspartate 495.

Belongs to the chaperonin (HSP60) family. Forms a cylinder of 14 subunits composed of two heptameric rings stacked back-to-back. Interacts with the co-chaperonin GroES.

It is found in the cytoplasm. The catalysed reaction is ATP + H2O + a folded polypeptide = ADP + phosphate + an unfolded polypeptide.. In terms of biological role, together with its co-chaperonin GroES, plays an essential role in assisting protein folding. The GroEL-GroES system forms a nano-cage that allows encapsulation of the non-native substrate proteins and provides a physical environment optimized to promote and accelerate protein folding. This chain is Chaperonin GroEL, found in Dichelobacter nodosus (strain VCS1703A).